The following is an 863-amino-acid chain: Probable beta-glucosidase A (863 aa).

The first 19 residues, 1 to 19, serve as a signal peptide directing secretion; that stretch reads MKLGWLEAAALTAASVASA. N-linked (GlcNAc...) asparagine glycosylation is found at N65, N214, and N255. Residue D283 is part of the active site. N-linked (GlcNAc...) asparagine glycosylation is found at N318, N325, N357, N493, N526, N545, N567, N664, and N715. The interval 720–754 is disordered; that stretch reads KESSGDPNYGWDDEDYIPEGAKDGSPQDVLPSGGG.

The protein belongs to the glycosyl hydrolase 3 family.

The protein localises to the secreted. The enzyme catalyses Hydrolysis of terminal, non-reducing beta-D-glucosyl residues with release of beta-D-glucose.. It participates in glycan metabolism; cellulose degradation. In terms of biological role, beta-glucosidases are one of a number of cellulolytic enzymes involved in the degradation of cellulosic biomass. Catalyzes the last step releasing glucose from the inhibitory cellobiose. This Emericella nidulans (strain FGSC A4 / ATCC 38163 / CBS 112.46 / NRRL 194 / M139) (Aspergillus nidulans) protein is Probable beta-glucosidase A (bglA).